Here is a 199-residue protein sequence, read N- to C-terminus: Dephospho-CoA kinase (199 aa).

The region spanning 3 to 199 (VLGLTGSIGM…AAARMPRRRP (197 aa)) is the DPCK domain. 11–16 (GMGKST) is a binding site for ATP.

The protein belongs to the CoaE family.

It is found in the cytoplasm. It carries out the reaction 3'-dephospho-CoA + ATP = ADP + CoA + H(+). The protein operates within cofactor biosynthesis; coenzyme A biosynthesis; CoA from (R)-pantothenate: step 5/5. Its function is as follows. Catalyzes the phosphorylation of the 3'-hydroxyl group of dephosphocoenzyme A to form coenzyme A. The chain is Dephospho-CoA kinase from Rhodopseudomonas palustris (strain HaA2).